The chain runs to 55 residues: Metallothionein-1 (55 aa).

The protein belongs to the metallothionein superfamily. Type 11 family.

This chain is Metallothionein-1 (MTP1), found in Yarrowia lipolytica (strain CLIB 122 / E 150) (Yeast).